The primary structure comprises 943 residues: Netrin receptor UNC5B-a (943 aa).

The signal sequence occupies residues 1 to 30 (MYLSRNPSGAALAAILVALILSCNFPSSTA). Residues 31 to 380 (GIEYSDVLPD…LESTGDVALY (350 aa)) lie on the Extracellular side of the membrane. Residues 51–148 (PHFLLEPEDA…AGTTKSKRSY (98 aa)) form the Ig-like domain. Cystine bridges form between C72–C133, C84–C131, C177–C228, C261–C298, C265–C302, C276–C288, C317–C351, C321–C356, and C329–C341. The Ig-like C2-type domain occupies 150 to 245 (RIAYLRKNFD…KRRSTTATVI (96 aa)). N-linked (GlcNAc...) asparagine glycosylation occurs at N225. 2 TSP type-1 domains span residues 249-303 (NGGW…TMCP) and 305-357 (DGGW…GLCM). A glycan (N-linked (GlcNAc...) asparagine) is linked at N350. Residues 381–401 (AGLVVAIFIVIILLMAVGIVV) traverse the membrane as a helical segment. The Cytoplasmic segment spans residues 402–943 (YRRNCREFDT…MLVMATDGDC (542 aa)). In terms of domain architecture, ZU5 spans 542–685 (NSVTGTFGSL…LGTYAFVGES (144 aa)). A UPA domain region spans residues 688 to 836 (RSAIKRLQLA…LEENVKSFDP (149 aa)). The region spanning 863–941 (KICNSLDAPN…EMMLVMATDG (79 aa)) is the Death domain.

It belongs to the unc-5 family. In terms of assembly, interacts (via extracellular domain) with flrt3 (via extracellular domain). Interacts with rnd1. Post-translationally, phosphorylated on cytoplasmic tyrosine residues. In terms of tissue distribution, in the developing visual system, it is expressed within the developing optic vesicles and later become restricted to the dorsal ciliary marginal zone, a site of retinoblast proliferation and differentiation.

The protein localises to the cell membrane. In terms of biological role, plays a role in cell-cell adhesion during embryonic development. Receptor for netrin required for axon guidance. Mediates axon repulsion of neuronal growth cones in the developing nervous system upon ligand binding. The sequence is that of Netrin receptor UNC5B-a (unc5b-a) from Xenopus laevis (African clawed frog).